We begin with the raw amino-acid sequence, 175 residues long: Sec-independent protein translocase protein TatB (175 aa).

A helical membrane pass occupies residues 1 to 21 (MLDLGLTKMALIGVVALVVLG). 2 disordered regions span residues 104 to 132 (GGAL…RKNW) and 155 to 175 (SGAA…TRFF).

This sequence belongs to the TatB family. In terms of assembly, the Tat system comprises two distinct complexes: a TatABC complex, containing multiple copies of TatA, TatB and TatC subunits, and a separate TatA complex, containing only TatA subunits. Substrates initially bind to the TatABC complex, which probably triggers association of the separate TatA complex to form the active translocon.

Its subcellular location is the cell inner membrane. In terms of biological role, part of the twin-arginine translocation (Tat) system that transports large folded proteins containing a characteristic twin-arginine motif in their signal peptide across membranes. Together with TatC, TatB is part of a receptor directly interacting with Tat signal peptides. TatB may form an oligomeric binding site that transiently accommodates folded Tat precursor proteins before their translocation. This is Sec-independent protein translocase protein TatB from Paraburkholderia xenovorans (strain LB400).